Here is a 119-residue protein sequence, read N- to C-terminus: Holo-[acyl-carrier-protein] synthase (119 aa).

2 residues coordinate Mg(2+): D8 and E58.

The protein belongs to the P-Pant transferase superfamily. AcpS family. Requires Mg(2+) as cofactor.

It is found in the cytoplasm. The catalysed reaction is apo-[ACP] + CoA = holo-[ACP] + adenosine 3',5'-bisphosphate + H(+). In terms of biological role, transfers the 4'-phosphopantetheine moiety from coenzyme A to a Ser of acyl-carrier-protein. This chain is Holo-[acyl-carrier-protein] synthase, found in Bacillus cytotoxicus (strain DSM 22905 / CIP 110041 / 391-98 / NVH 391-98).